Here is a 141-residue protein sequence, read N- to C-terminus: Mitochondrial import inner membrane translocase subunit Tim16 (141 aa).

2 disordered regions span residues 34 to 53 (AARR…SNLR) and 108 to 141 (LDHE…RQRR). A J-like region spans residues 60 to 113 (EAKQILNIDDPKNVDAITKNYEHLFQVNERSKGGSFYIQSKVFRAKERLDHEIK). Basic and acidic residues predominate over residues 108–118 (LDHEIKAHEQP).

It belongs to the TIM16/PAM16 family. In terms of assembly, probable component of the PAM complex at least composed of a mitochondrial HSP70 protein, Roe1, TIM44, blp/TIM16 and TIM14. Associates with the TIM23 complex. As to expression, expressed in distinct cells in the embryonic and larval nervous system.

The protein resides in the mitochondrion inner membrane. Its function is as follows. Regulates ATP-dependent protein translocation into the mitochondrial matrix. Essential for larval development. In Drosophila melanogaster (Fruit fly), this protein is Mitochondrial import inner membrane translocase subunit Tim16 (blp).